The following is a 242-amino-acid chain: Uridylate kinase (242 aa).

Position 16-19 (16-19 (KVSG)) interacts with ATP. Glycine 58 lines the UMP pocket. ATP-binding residues include glycine 59 and arginine 63. UMP-binding positions include aspartate 78 and 139-146 (TGNPFCTT). Threonine 166, glutamine 167, tyrosine 172, and aspartate 175 together coordinate ATP.

Belongs to the UMP kinase family. In terms of assembly, homohexamer.

It localises to the cytoplasm. The enzyme catalyses UMP + ATP = UDP + ADP. It functions in the pathway pyrimidine metabolism; CTP biosynthesis via de novo pathway; UDP from UMP (UMPK route): step 1/1. Inhibited by UTP. Catalyzes the reversible phosphorylation of UMP to UDP. The protein is Uridylate kinase of Rickettsia prowazekii (strain Madrid E).